Consider the following 1331-residue polypeptide: Disease resistance protein RUN1 (1331 aa).

Residues 1-20 (MASTSSSRASSSSSSSSTPS) are disordered. The region spanning 25-190 (ITYDVFLSFR…EITDSIFRRL (166 aa)) is the TIR domain. Residues 34–39 (RGEDTR) and Gly66 each bind NAD(+). Glu100 is an active-site residue. The 229-residue stretch at 206 to 434 (SHVKEMIWRL…REPEAEILSV (229 aa)) folds into the NB-ARC domain. LRR repeat units follow at residues 429–452 (AEIL…IFLD), 480–509 (IKNL…GWEI), 540–565 (IKRV…AFAK), 616–638 (SYEL…NFDG), 648–673 (CSNI…SYSR), 684–708 (MPNL…VGNM), 709–732 (KKLT…IGDL), 734–756 (SLEI…GGNM), 757–779 (KSLT…IGDL), 781–803 (SLKY…GGNM), 804–826 (KSLR…IRDL), 828–850 (SLER…GGNM), 851–873 (KSLM…IGDL), 875–897 (SLKY…GGNM), 898–920 (KSLT…IGDL), 922–944 (SLVS…GGNM), 945–967 (KSLN…IGDL), 969–991 (SLMR…VGNM), 992–1014 (KSLE…IGDL), and 1017–1040 (LEKL…AIDA). A Nuclear localization signal motif is present at residues 1287–1291 (RKRRR).

The protein belongs to the disease resistance TIR-NB-LRR family.

Its subcellular location is the nucleus. It is found in the cytoplasm. The enzyme catalyses NAD(+) + H2O = ADP-D-ribose + nicotinamide + H(+). The catalysed reaction is NADP(+) + H2O = ADP-D-ribose 2'-phosphate + nicotinamide + H(+). Its function is as follows. Disease resistance (R) protein that confers resistance to multiple powdery and downy mildew by promoting cell death. Acts as a NAD(+) hydrolase (NADase): in response to activation, catalyzes cleavage of NAD(+) into ADP-D-ribose (ADPR) and nicotinamide; NAD(+) cleavage triggering a defense system that promotes cell death. Also able to hydrolyze NADP(+), but not other NAD(+)-related molecules. This Vitis rotundifolia (Muscadine grape) protein is Disease resistance protein RUN1.